Here is a 322-residue protein sequence, read N- to C-terminus: Acetyl-coenzyme A carboxylase carboxyl transferase subunit alpha (322 aa).

A CoA carboxyltransferase C-terminal domain is found at 39 to 296 (DLTALKKQLI…HSKLVTELNY (258 aa)).

Belongs to the AccA family. As to quaternary structure, acetyl-CoA carboxylase is a heterohexamer composed of biotin carboxyl carrier protein (accB), biotin carboxylase (accC) and two subunits each of ACCase subunit alpha (accA) and ACCase subunit beta (accD).

It localises to the plastid. The protein resides in the chloroplast. It carries out the reaction N(6)-carboxybiotinyl-L-lysyl-[protein] + acetyl-CoA = N(6)-biotinyl-L-lysyl-[protein] + malonyl-CoA. It participates in lipid metabolism; malonyl-CoA biosynthesis; malonyl-CoA from acetyl-CoA: step 1/1. Component of the acetyl coenzyme A carboxylase (ACC) complex. First, biotin carboxylase catalyzes the carboxylation of biotin on its carrier protein (BCCP) and then the CO(2) group is transferred by the carboxyltransferase to acetyl-CoA to form malonyl-CoA. This chain is Acetyl-coenzyme A carboxylase carboxyl transferase subunit alpha, found in Antithamnion sp. (Red alga).